Consider the following 375-residue polypeptide: Chaperone protein DnaJ (375 aa).

Positions 5 to 69 constitute a J domain; that stretch reads DYYEILGIDK…QKRAQYDQFG (65 aa). A CR-type zinc finger spans residues 131-213; sequence GKETDIEIPK…CGGSGTVQKN (83 aa). The Zn(2+) site is built by cysteine 144, cysteine 147, cysteine 161, cysteine 164, cysteine 187, cysteine 190, cysteine 201, and cysteine 204. CXXCXGXG motif repeat units follow at residues 144–151, 161–168, 187–194, and 201–208; these read CDTCNGSG, CSHCHGSG, CNYCQGTG, and CNTCGGSG.

This sequence belongs to the DnaJ family. Homodimer. It depends on Zn(2+) as a cofactor.

The protein localises to the cytoplasm. Its function is as follows. Participates actively in the response to hyperosmotic and heat shock by preventing the aggregation of stress-denatured proteins and by disaggregating proteins, also in an autonomous, DnaK-independent fashion. Unfolded proteins bind initially to DnaJ; upon interaction with the DnaJ-bound protein, DnaK hydrolyzes its bound ATP, resulting in the formation of a stable complex. GrpE releases ADP from DnaK; ATP binding to DnaK triggers the release of the substrate protein, thus completing the reaction cycle. Several rounds of ATP-dependent interactions between DnaJ, DnaK and GrpE are required for fully efficient folding. Also involved, together with DnaK and GrpE, in the DNA replication of plasmids through activation of initiation proteins. The protein is Chaperone protein DnaJ of Oceanobacillus iheyensis (strain DSM 14371 / CIP 107618 / JCM 11309 / KCTC 3954 / HTE831).